The following is a 379-amino-acid chain: Glutamate 5-kinase (379 aa).

K15 lines the ATP pocket. Substrate is bound by residues S56, D143, and N155. 175-176 serves as a coordination point for ATP; the sequence is SD. A PUA domain is found at 281–358; the sequence is RGTLAIDAGA…SDAAQLLGVR (78 aa).

This sequence belongs to the glutamate 5-kinase family.

The protein localises to the cytoplasm. It catalyses the reaction L-glutamate + ATP = L-glutamyl 5-phosphate + ADP. It participates in amino-acid biosynthesis; L-proline biosynthesis; L-glutamate 5-semialdehyde from L-glutamate: step 1/2. Its function is as follows. Catalyzes the transfer of a phosphate group to glutamate to form L-glutamate 5-phosphate. The polypeptide is Glutamate 5-kinase (Nitrobacter winogradskyi (strain ATCC 25391 / DSM 10237 / CIP 104748 / NCIMB 11846 / Nb-255)).